The following is a 629-amino-acid chain: Phosphomethylpyrimidine synthase (629 aa).

A disordered region spans residues 1 to 21 (MSIKAKNAAHLRESAQVDSGS). Residues Asn233, Met262, Tyr291, His327, 347–349 (SRG), 388–391 (DGLR), and Glu427 each bind substrate. A Zn(2+)-binding site is contributed by His431. Tyr454 is a binding site for substrate. Residue His495 coordinates Zn(2+). Cys575, Cys578, and Cys583 together coordinate [4Fe-4S] cluster.

The protein belongs to the ThiC family. Homodimer. [4Fe-4S] cluster is required as a cofactor.

It catalyses the reaction 5-amino-1-(5-phospho-beta-D-ribosyl)imidazole + S-adenosyl-L-methionine = 4-amino-2-methyl-5-(phosphooxymethyl)pyrimidine + CO + 5'-deoxyadenosine + formate + L-methionine + 3 H(+). Its pathway is cofactor biosynthesis; thiamine diphosphate biosynthesis. In terms of biological role, catalyzes the synthesis of the hydroxymethylpyrimidine phosphate (HMP-P) moiety of thiamine from aminoimidazole ribotide (AIR) in a radical S-adenosyl-L-methionine (SAM)-dependent reaction. The protein is Phosphomethylpyrimidine synthase of Pseudomonas syringae pv. syringae (strain B728a).